Reading from the N-terminus, the 496-residue chain is Cobyric acid synthase (496 aa).

Residues 264–458 (HTRIAVVAYP…LHGLFEDAAV (195 aa)) enclose the GATase cobBQ-type domain. Cys-345 (nucleophile) is an active-site residue. The active site involves His-450.

Belongs to the CobB/CobQ family. CobQ subfamily.

Its pathway is cofactor biosynthesis; adenosylcobalamin biosynthesis. Catalyzes amidations at positions B, D, E, and G on adenosylcobyrinic A,C-diamide. NH(2) groups are provided by glutamine, and one molecule of ATP is hydrogenolyzed for each amidation. In Acidovorax ebreus (strain TPSY) (Diaphorobacter sp. (strain TPSY)), this protein is Cobyric acid synthase.